An 829-amino-acid polypeptide reads, in one-letter code: Translation initiation factor IF-2 (829 aa).

A compositionally biased stretch (basic and acidic residues) spans 128 to 137 (QNAEEEKVEA). The segment at 128–157 (QNAEEEKVEASAKTVQNNEDIQPQTSKKKE) is disordered. Positions 140–152 (KTVQNNEDIQPQT) are enriched in polar residues. The region spanning 327–497 (TRAPVVTVMG…LLIAEMQDLK (171 aa)) is the tr-type G domain. Positions 336-343 (GHVDHGKT) are G1. A GTP-binding site is contributed by 336–343 (GHVDHGKT). The G2 stretch occupies residues 361–365 (GITQH). The segment at 383–386 (DTPG) is G3. GTP is bound by residues 383-387 (DTPGH) and 437-440 (NKID). The G4 stretch occupies residues 437-440 (NKID). The G5 stretch occupies residues 473–475 (SAL).

Belongs to the TRAFAC class translation factor GTPase superfamily. Classic translation factor GTPase family. IF-2 subfamily.

The protein localises to the cytoplasm. Its function is as follows. One of the essential components for the initiation of protein synthesis. Protects formylmethionyl-tRNA from spontaneous hydrolysis and promotes its binding to the 30S ribosomal subunits. Also involved in the hydrolysis of GTP during the formation of the 70S ribosomal complex. This chain is Translation initiation factor IF-2, found in Rickettsia felis (strain ATCC VR-1525 / URRWXCal2) (Rickettsia azadi).